Consider the following 491-residue polypeptide: Protein SET DOMAIN GROUP 40 (491 aa).

Residues 36 to 278 (HSLSVSDFPD…LGEQVLLCYG (243 aa)) enclose the SET domain.

This sequence belongs to the class V-like SAM-binding methyltransferase superfamily.

In Arabidopsis thaliana (Mouse-ear cress), this protein is Protein SET DOMAIN GROUP 40 (SDG40).